The chain runs to 422 residues: L-threonine dehydratase biosynthetic IlvA (422 aa).

An N6-(pyridoxal phosphate)lysine modification is found at Lys-56. Residues Asn-83, 189–193 (GGGGL), and Ser-315 each bind pyridoxal 5'-phosphate. Residues 339 to 413 (HYFILNFPQR…FDPSNIYINE (75 aa)) enclose the ACT-like domain.

It belongs to the serine/threonine dehydratase family. In terms of assembly, homotetramer. Pyridoxal 5'-phosphate is required as a cofactor.

It catalyses the reaction L-threonine = 2-oxobutanoate + NH4(+). The protein operates within amino-acid biosynthesis; L-isoleucine biosynthesis; 2-oxobutanoate from L-threonine: step 1/1. Its function is as follows. Catalyzes the anaerobic formation of alpha-ketobutyrate and ammonia from threonine in a two-step reaction. The first step involved a dehydration of threonine and a production of enamine intermediates (aminocrotonate), which tautomerizes to its imine form (iminobutyrate). Both intermediates are unstable and short-lived. The second step is the nonenzymatic hydrolysis of the enamine/imine intermediates to form 2-ketobutyrate and free ammonia. In the low water environment of the cell, the second step is accelerated by RidA. The polypeptide is L-threonine dehydratase biosynthetic IlvA (ilvA) (Staphylococcus aureus (strain bovine RF122 / ET3-1)).